Here is a 599-residue protein sequence, read N- to C-terminus: MADGGGGEEGSASALRGSARRRGAVQPAGLDADELLTLMHGSDPVKVELNRLENEVRDKDRELGDAHAEIKALRLSERAREKAVEELTAEYEKLDEKLKLTESLLESKNLELKKTNDEKKAAMAAQFAAEATLRRVHAAQKDDDMPPIEAILAPLEAELKLARQEIAKLQDDNRALDRLTKQKEAALLEAERTVEIALAKAAMVDDMQNKNQELMKQIEICQEENKILDRLHRQKVAEVEKLSQTVRELEEAVLAGGAAANAVRDYQRKVQEMNEERKILDRELARAKVTANRVAVVVANEWKDANDKVMPVKQWLEERRFLQGEMQQLRDKLAIAERTARSEAQLKEKYQLRLKVLEDGLRGPPSGSSRPTEGKSIGNGPSRRLSLGGADNMSKISPNGMLARRSPSFNSRSSLSTSSSLVIKHAKGTSRSFDGGTRSLDRGKVLGNGPHLLNRSTDAVRDCETTDDWKAANTEEKGSEATNSSSTDTVSGVLYDMLQKEVISLRKACHEKDQSLKDKDDAIEMLAKKVDTLTKAMEVEAKKMRREVAAMEKEVAAMRLDKDQENKAKRPGNFKGPGTTSQAPHGRNAPRGGLTRNLQ.

The segment at 1-30 is disordered; it reads MADGGGGEEGSASALRGSARRRGAVQPAGL. A coiled-coil region spans residues 43-349; sequence DPVKVELNRL…ARSEAQLKEK (307 aa). Residues 227–460 form a required for targeting to microtubules region; it reads ILDRLHRQKV…HLLNRSTDAV (234 aa). Disordered stretches follow at residues 357–453 and 557–599; these read LEDG…PHLL and AMRL…RNLQ. Residues 404-420 show a composition bias toward low complexity; sequence RRSPSFNSRSSLSTSSS. A coiled-coil region spans residues 533 to 570; sequence LTKAMEVEAKKMRREVAAMEKEVAAMRLDKDQENKAKR. Over residues 557-568 the composition is skewed to basic and acidic residues; the sequence is AMRLDKDQENKA.

This sequence belongs to the MAP70 family.

It is found in the cytoplasm. Its subcellular location is the cytoskeleton. Its function is as follows. Plant-specific protein that interact with microtubules. This chain is Microtubule-associated protein 70-2 (MAP70.2), found in Oryza sativa subsp. japonica (Rice).